A 509-amino-acid chain; its full sequence is Steroid 17-alpha-hydroxylase/17,20 lyase (509 aa).

Cys440 contributes to the heme binding site.

Belongs to the cytochrome P450 family. Heme serves as cofactor.

The protein resides in the endoplasmic reticulum membrane. It is found in the microsome membrane. The catalysed reaction is a C21-steroid + reduced [NADPH--hemoprotein reductase] + O2 = a 17alpha-hydroxy-C21-steroid + oxidized [NADPH--hemoprotein reductase] + H2O + H(+). It catalyses the reaction progesterone + reduced [NADPH--hemoprotein reductase] + O2 = 17alpha-hydroxyprogesterone + oxidized [NADPH--hemoprotein reductase] + H2O + H(+). It carries out the reaction pregnenolone + reduced [NADPH--hemoprotein reductase] + O2 = 17alpha-hydroxypregnenolone + oxidized [NADPH--hemoprotein reductase] + H2O + H(+). The enzyme catalyses 17alpha-hydroxyprogesterone + reduced [NADPH--hemoprotein reductase] + O2 = androst-4-ene-3,17-dione + acetate + oxidized [NADPH--hemoprotein reductase] + H2O + 2 H(+). The catalysed reaction is 17alpha-hydroxyprogesterone + reduced [NADPH--hemoprotein reductase] + O2 = 16alpha,17alpha-dihydroxyprogesterone + oxidized [NADPH--hemoprotein reductase] + H2O + H(+). It catalyses the reaction 16alpha,17alpha-dihydroxyprogesterone + reduced [NADPH--hemoprotein reductase] + O2 = 6beta,16alpha,17alpha-trihydroxyprogesterone + oxidized [NADPH--hemoprotein reductase] + H2O + H(+). It carries out the reaction 17alpha-hydroxypregnenolone + reduced [NADPH--hemoprotein reductase] + O2 = 3beta-hydroxyandrost-5-en-17-one + acetate + oxidized [NADPH--hemoprotein reductase] + H2O + 2 H(+). The enzyme catalyses 16alpha,17alpha-dihydroxypregnenolone + reduced [NADPH--hemoprotein reductase] + O2 = 3beta,16alpha-dihydroxy-androst-5-en-17-one + acetate + oxidized [NADPH--hemoprotein reductase] + H2O + 2 H(+). The catalysed reaction is 3beta-hydroxyandrost-5-en-17-one + reduced [NADPH--hemoprotein reductase] + O2 = 3beta,16alpha-dihydroxy-androst-5-en-17-one + oxidized [NADPH--hemoprotein reductase] + H2O + H(+). It catalyses the reaction androst-4-ene-3,17-dione + reduced [NADPH--hemoprotein reductase] + O2 = 16alpha-hydroxyandrost-4-ene-3,17-dione + oxidized [NADPH--hemoprotein reductase] + H2O + H(+). It participates in steroid hormone biosynthesis. The protein operates within steroid biosynthesis; glucocorticoid biosynthesis. With respect to regulation, regulated predominantly by intracellular cAMP levels. The 17,20-lyase activity is stimulated by cytochrome b5, which acts as an allosteric effector increasing the Vmax of the lyase activity. In terms of biological role, a cytochrome P450 monooxygenase involved in corticoid and androgen biosynthesis. Catalyzes 17-alpha hydroxylation of C21 steroids, which is common for both pathways. A second oxidative step, required only for androgen synthesis, involves an acyl-carbon cleavage. The 17-alpha hydroxy intermediates, as part of adrenal glucocorticoids biosynthesis pathway, are precursors of cortisol. Hydroxylates steroid hormones, pregnenolone and progesterone to form 17-alpha hydroxy metabolites, followed by the cleavage of the C17-C20 bond to form C19 steroids, dehydroepiandrosterone (DHEA) and androstenedione. Has 16-alpha hydroxylase activity. Catalyzes 16-alpha hydroxylation of 17-alpha hydroxy pregnenolone, followed by the cleavage of the C17-C20 bond to form 16-alpha-hydroxy DHEA. Also 16-alpha hydroxylates androgens, relevant for estriol synthesis. Mechanistically, uses molecular oxygen inserting one oxygen atom into a substrate, and reducing the second into a water molecule, with two electrons provided by NADPH via cytochrome P450 reductase (CPR; NADPH-ferrihemoprotein reductase). This Peromyscus leucopus (White-footed mouse) protein is Steroid 17-alpha-hydroxylase/17,20 lyase (Cyp17a1).